Here is a 917-residue protein sequence, read N- to C-terminus: Spermatogenesis-associated protein 31D3 (917 aa).

The chain crosses the membrane as a helical span at residues 29-49 (FICLSGLGLFILYLFYMVLTL). 3 disordered regions span residues 55–80 (EKNN…KDRK), 152–195 (SVSP…PPPL), and 773–797 (SQET…LRSN). Residues 63–74 (HQGRARRKRKSV) are compositionally biased toward basic residues. Positions 152 to 163 (SVSPLASSASGA) are enriched in low complexity. Positions 164–177 (ESSFTLASTPSATT) are enriched in polar residues. Residues 782 to 797 (LLHDPETSSEEDLRSN) are compositionally biased toward basic and acidic residues.

The protein belongs to the SPATA31 family.

It is found in the membrane. Its function is as follows. May play a role in spermatogenesis. This is Spermatogenesis-associated protein 31D3 (SPATA31D3) from Homo sapiens (Human).